We begin with the raw amino-acid sequence, 247 residues long: 2,3-bisphosphoglycerate-dependent phosphoglycerate mutase (247 aa).

Residues 8 to 15 (RHGESTWN), 21 to 22 (TG), R60, 87 to 90 (ERHY), K98, 114 to 115 (RR), and 183 to 184 (GN) contribute to the substrate site. H9 acts as the Tele-phosphohistidine intermediate in catalysis. Residue E87 is the Proton donor/acceptor of the active site.

This sequence belongs to the phosphoglycerate mutase family. BPG-dependent PGAM subfamily. Homodimer.

The enzyme catalyses (2R)-2-phosphoglycerate = (2R)-3-phosphoglycerate. Its pathway is carbohydrate degradation; glycolysis; pyruvate from D-glyceraldehyde 3-phosphate: step 3/5. Catalyzes the interconversion of 2-phosphoglycerate and 3-phosphoglycerate. The sequence is that of 2,3-bisphosphoglycerate-dependent phosphoglycerate mutase from Methylibium petroleiphilum (strain ATCC BAA-1232 / LMG 22953 / PM1).